The primary structure comprises 475 residues: MLPPGRNRTAQPARLGLQRQLAQVDAPAGSATPLGPAQVVTAGLLTLLIVWTLLGNVLVCAAIVRSRHLRAKMTNIFIVSLAVSDLFVALLVMPWKAVAEVAGYWPFGTFCDIWVAFDIMCSTASILNLCIISVDRYWAISRPFRYERKMTQRVALVMVGLAWTLSILISFIPVQLNWHRDKAGSQGQEGLLSNGTPWEEGWELEGRTENCDSSLNRTYAISSSLISFYIPVAIMIVTYTRIYRIAQVQIRRISSLERAAEHAQSCRSRGAYEPDPSLRASIKKETKVFKTLSMIMGVFVCCWLPFFILNCMVPFCSSGDAEGPKTGFPCVSETTFDIFVWFGWANSSLNPIIYAFNADFRKVFAQLLGCSHFCFRTPVQTVNISNELISYNQDTVFHKEIATAYVHMIPNAVSSGDREVGEEEEEGPFDHMSQISPTTPDGDLAAESVWELDCEEEVSLGKISPLTPNCFDKTA.

The Extracellular portion of the chain corresponds to 1–38 (MLPPGRNRTAQPARLGLQRQLAQVDAPAGSATPLGPAQ). An N-linked (GlcNAc...) asparagine glycan is attached at N7. Residues 39–64 (VVTAGLLTLLIVWTLLGNVLVCAAIV) form a helical membrane-spanning segment. The Cytoplasmic segment spans residues 65-75 (RSRHLRAKMTN). Residues 76–102 (IFIVSLAVSDLFVALLVMPWKAVAEVA) traverse the membrane as a helical segment. At 103–111 (GYWPFGTFC) the chain is on the extracellular side. A disulfide bond links C111 and C211. The chain crosses the membrane as a helical span at residues 112-134 (DIWVAFDIMCSTASILNLCIISV). Over 135-153 (DRYWAISRPFRYERKMTQR) the chain is Cytoplasmic. A helical transmembrane segment spans residues 154–179 (VALVMVGLAWTLSILISFIPVQLNWH). Over 180–215 (RDKAGSQGQEGLLSNGTPWEEGWELEGRTENCDSSL) the chain is Extracellular. Residues 216 to 240 (NRTYAISSSLISFYIPVAIMIVTYT) form a helical membrane-spanning segment. Residues 241–289 (RIYRIAQVQIRRISSLERAAEHAQSCRSRGAYEPDPSLRASIKKETKVF) lie on the Cytoplasmic side of the membrane. A helical transmembrane segment spans residues 290–317 (KTLSMIMGVFVCCWLPFFILNCMVPFCS). The Extracellular portion of the chain corresponds to 318 to 335 (SGDAEGPKTGFPCVSETT). A helical transmembrane segment spans residues 336–357 (FDIFVWFGWANSSLNPIIYAFN). Residues 358 to 475 (ADFRKVFAQL…LTPNCFDKTA (118 aa)) are Cytoplasmic-facing. C370 is lipidated: S-palmitoyl cysteine. The disordered stretch occupies residues 415–443 (SGDREVGEEEEEGPFDHMSQISPTTPDGD).

Belongs to the G-protein coupled receptor 1 family. As to expression, brain, in the lateral mammillary nuclei, the anterior pretectal nuclei, and several layers of the hippocampus.

The protein localises to the cell membrane. Functionally, dopamine receptor whose activity is mediated by G proteins which activate adenylyl cyclase. The chain is D(1B) dopamine receptor (Drd5) from Rattus norvegicus (Rat).